A 68-amino-acid chain; its full sequence is Peptide Hp1412 (68 aa).

Residues 1–23 form the signal peptide; sequence MKTHFAIFLITLFLFQMFSQSDA. Cys36 carries the cysteine amide modification. The propeptide occupies 40 to 68; it reads GLSDLYDLDEMFDGEISQADIDFLKELMR.

Belongs to the non-disulfide-bridged peptide (NDBP) superfamily. Short antimicrobial peptide (group 4) family. As to expression, expressed by the venom gland.

Its subcellular location is the secreted. It is found in the target cell membrane. Its function is as follows. Amphipathic peptide with antimicrobial activity. This chain is Peptide Hp1412, found in Heterometrus petersii (Asian forest scorpion).